An 88-amino-acid chain; its full sequence is FXYD domain-containing ion transport regulator 3 (88 aa).

An N-terminal signal peptide occupies residues 1 to 20 (MQEFALSLLVLLAGLPTLDA). Topologically, residues 21-38 (NDPEDKDSPFYYDWHSLR) are extracellular. A helical membrane pass occupies residues 39–59 (VGGLICAGILCALGIIVLMSG). Over 60–88 (KCKCKFSQKPSHRPGDGPPLITPGSAHNC) the chain is Cytoplasmic. Residues 66-88 (SQKPSHRPGDGPPLITPGSAHNC) are disordered.

The protein belongs to the FXYD family. Regulatory subunit of the sodium/potassium-transporting ATPase which is composed of a catalytic alpha subunit, a non-catalytic beta subunit and an additional regulatory subunit. Interacts with catalytic alpha subunit ATP1A1. Also interacts with non-catalytic beta subunit ATP1B1. Interacts with the alpha1-beta1, alpha2-beta1 and alpha3-beta1 NKA isozymes. Glutathionylated.

The protein resides in the cell membrane. Functionally, associates with and regulates the activity of the sodium/potassium-transporting ATPase (NKA) which transports Na(+) out of the cell and K(+) into the cell. Reduces glutathionylation of the NKA beta-1 subunit ATP1B1, thus reversing glutathionylation-mediated inhibition of ATP1B1. Induces a hyperpolarization-activated chloride current when expressed in Xenopus oocytes. In Rattus norvegicus (Rat), this protein is FXYD domain-containing ion transport regulator 3 (Fxyd3).